The sequence spans 349 residues: CCN family member 2 (349 aa).

The N-terminal stretch at 1–26 is a signal peptide; that stretch reads MTAASMGPVRVAFVVLLALCSRPAVG. The IGFBP N-terminal domain occupies 27–98; it reads QNCSGPCRCP…NRKIGVCTAK (72 aa). The N-linked (GlcNAc...) asparagine glycan is linked to asparagine 28. 6 disulfide bridges follow: cysteine 29/cysteine 54, cysteine 33/cysteine 56, cysteine 35/cysteine 57, cysteine 43/cysteine 60, cysteine 68/cysteine 82, and cysteine 74/cysteine 95. Positions 101-167 constitute a VWFC domain; sequence APCIFGGTVY…GKCCEEWVCD (67 aa). Positions 198-243 constitute a TSP type-1 domain; the sequence is NCLVQTTEWSACSKTCGMGISTRVTNDNASCRLEKQSRLCMVRPCE. N-linked (GlcNAc...) asparagine glycosylation is present at asparagine 225. The heparin-binding stretch occupies residues 247 to 349; that stretch reads EENIKKGKKC…YYRKMYGDMA (103 aa). Disulfide bonds link cysteine 256–cysteine 293, cysteine 273–cysteine 307, cysteine 284–cysteine 323, cysteine 287–cysteine 325, and cysteine 292–cysteine 329. Residues 256 to 330 form the CTCK domain; that stretch reads CIRTPKISKP…KTCACHYNCP (75 aa).

Belongs to the CCN family. In terms of assembly, monomer. Interacts with TSKU. In terms of tissue distribution, expressed in bone marrow and thymic cells. Also expressed one of two Wilms tumors tested.

It is found in the secreted. The protein localises to the extracellular space. It localises to the extracellular matrix. Its function is as follows. Major connective tissue mitoattractant secreted by vascular endothelial cells. Promotes proliferation and differentiation of chondrocytes. Is involved in the stimulation of osteoblast differentiation and has a critical role in osteogenesis. Mediates heparin- and divalent cation-dependent cell adhesion in many cell types including fibroblasts, myofibroblasts, endothelial and epithelial cells. Enhances fibroblast growth factor-induced DNA synthesis. The polypeptide is CCN family member 2 (Homo sapiens (Human)).